A 748-amino-acid chain; its full sequence is MEYTYQYSWIIPFISLPIPILIGVGLLLFPTATKNLRRLWSFPSILLLSIVMIFAVYLSIDQINTSYIYQYVWSWTINNDFSLELGYFIDPLTCIMAILITTVGIMVLIYSDNYMSHDQGYLRFFAYMSLFNTSMLGLVTSSNLIQIYIFWELVGMCSYLLIGFWFTRPTAANACQKAFVTNRVGDFGLLLGILGLYWTTGSFEFRDLFQIFNNLIDNNEVNFLFLTLCAVLLFAGAVAKSAQFPLHVWLPDAMEGPTPISALIHAATMVAAGIFLVARLLPLFIAIPYIMNLIALIGIITVLFGATLALAQKDIKRSLAYSTMSQLGYMMLALGMGSYQAALFHLITHAYSKALLFLGSGSIIHSMESVVGYSPDKSQNMVLMGGLTKHVPITKNAFLLGTLSLCGVPPLACFWSKDEILNDSWLYSPIFAIIACSTAGLTAFYMFRIYLLTFDGHLNLYCKNYSGKTNNSLYSISLWGKEGSKIIKKNFPFFSLLTMNNKERSSFWMKKTTYPFNSNVTKKMRPFVSSPHFSTKNTFYYPYESENTMLFPMFVLSLFTLFVGVIGSPFTQFNQEAIDLNILDKWLTPSINLLHESSKDSENWYEFVKNATFSVTIAFFGIFIASFFYKPTYSSLQNLNFRNSFVKSFTKNFFFEKIINIIYNWSYNRGYIDTFYRISLIGGIRILAELTYFFDRRIIDGITNAVGILNFFVAESIKYVGGGRISSYILLYLVYLVIFILVIYFVFF.

The next 16 membrane-spanning stretches (helical) occupy residues 9–29 (WIIP…LLLF), 40–60 (WSFP…YLSI), 89–109 (IDPL…MVLI), 125–145 (FAYM…SNLI), 147–167 (IYIF…FWFT), 185–205 (GDFG…SFEF), 219–239 (NEVN…GAVA), 258–278 (TPIS…FLVA), 280–300 (LLPL…IGII), 327–347 (LGYM…FHLI), 354–374 (ALLF…VGYS), 396–416 (NAFL…CFWS), 425–445 (WLYS…TAFY), 550–570 (LFPM…GSPF), 611–631 (ATFS…FYKP), and 728–748 (YILL…FVFF).

This sequence belongs to the complex I subunit 5 family. NDH is composed of at least 16 different subunits, 5 of which are encoded in the nucleus.

It localises to the plastid. The protein resides in the chloroplast thylakoid membrane. It carries out the reaction a plastoquinone + NADH + (n+1) H(+)(in) = a plastoquinol + NAD(+) + n H(+)(out). It catalyses the reaction a plastoquinone + NADPH + (n+1) H(+)(in) = a plastoquinol + NADP(+) + n H(+)(out). NDH shuttles electrons from NAD(P)H:plastoquinone, via FMN and iron-sulfur (Fe-S) centers, to quinones in the photosynthetic chain and possibly in a chloroplast respiratory chain. The immediate electron acceptor for the enzyme in this species is believed to be plastoquinone. Couples the redox reaction to proton translocation, and thus conserves the redox energy in a proton gradient. The protein is NAD(P)H-quinone oxidoreductase subunit 5, chloroplastic (ndhF) of Cucumis sativus (Cucumber).